Consider the following 130-residue polypeptide: MATVQYYGTGRRKEAVARVRLMPGKGNIIINNRPLEEYFTLDTLKYTVKQPLILTETIDKFDVYAKVSGGGLTGQAGAVRLGIARALVKVDSELRPILKKAGFLTRDPRMKERRKYGLKKARKAPQFSKR.

Positions 111 to 130 (KERRKYGLKKARKAPQFSKR) are disordered.

The protein belongs to the universal ribosomal protein uS9 family.

The sequence is that of Small ribosomal subunit protein uS9 from Thermoanaerobacter sp. (strain X514).